We begin with the raw amino-acid sequence, 268 residues long: Tryptophan synthase alpha chain (268 aa).

Catalysis depends on proton acceptor residues glutamate 49 and aspartate 60.

This sequence belongs to the TrpA family. As to quaternary structure, tetramer of two alpha and two beta chains.

The enzyme catalyses (1S,2R)-1-C-(indol-3-yl)glycerol 3-phosphate + L-serine = D-glyceraldehyde 3-phosphate + L-tryptophan + H2O. It participates in amino-acid biosynthesis; L-tryptophan biosynthesis; L-tryptophan from chorismate: step 5/5. Its function is as follows. The alpha subunit is responsible for the aldol cleavage of indoleglycerol phosphate to indole and glyceraldehyde 3-phosphate. This Photorhabdus laumondii subsp. laumondii (strain DSM 15139 / CIP 105565 / TT01) (Photorhabdus luminescens subsp. laumondii) protein is Tryptophan synthase alpha chain.